The primary structure comprises 338 residues: Tryptophan--tRNA ligase (338 aa).

ATP-binding positions include 11 to 13 (QPS) and 19 to 20 (GN). The 'HIGH' region motif lies at 12-20 (PSGELSIGN). Residue Asp-135 participates in L-tryptophan binding. Residues 147–149 (GSD), Val-189, and 198–202 (KMSKS) contribute to the ATP site. The short motif at 198 to 202 (KMSKS) is the 'KMSKS' region element.

The protein belongs to the class-I aminoacyl-tRNA synthetase family. As to quaternary structure, homodimer.

It is found in the cytoplasm. The enzyme catalyses tRNA(Trp) + L-tryptophan + ATP = L-tryptophyl-tRNA(Trp) + AMP + diphosphate + H(+). Functionally, catalyzes the attachment of tryptophan to tRNA(Trp). This Vibrio parahaemolyticus serotype O3:K6 (strain RIMD 2210633) protein is Tryptophan--tRNA ligase.